We begin with the raw amino-acid sequence, 467 residues long: Dynactin subunit 4 (467 aa).

A2 is modified (N-acetylalanine). Residues 152 to 172 (QQLAQKEKVERDRKKLARRRN) are a coiled coil. S203 is subject to Phosphoserine. K222 is covalently cross-linked (Glycyl lysine isopeptide (Lys-Gly) (interchain with G-Cter in SUMO2)). T414 bears the Phosphothreonine mark.

This sequence belongs to the dynactin subunit 4 family. As to quaternary structure, subunit of dynactin, a multiprotein complex part of a tripartite complex with dynein and a adapter, such as BICDL1, BICD2 or HOOK3. The dynactin complex is built around ACTR1A/ACTB filament and consists of an actin-related filament composed of a shoulder domain, a pointed end and a barbed end. Its length is defined by its flexible shoulder domain. The soulder is composed of 2 DCTN1 subunits, 4 DCTN2 and 2 DCTN3. The 4 DCNT2 (via N-terminus) bind the ACTR1A filament and act as molecular rulers to determine the length. The pointed end is important for binding dynein-dynactin cargo adapters. Consists of 4 subunits: ACTR10, DCNT4, DCTN5 and DCTN6. The barbed end is composed of a CAPZA1:CAPZB heterodimers, which binds ACTR1A/ACTB filament and dynactin and stabilizes dynactin. Interacts with ATP7B, but not ATP7A, in a copper-dependent manner. Interacts with ANK2; this interaction is required for localization at costameres. Interacts with N4BP2L1.

It is found in the cytoplasm. It localises to the cytoskeleton. The protein resides in the microtubule organizing center. Its subcellular location is the centrosome. The protein localises to the stress fiber. It is found in the cell cortex. It localises to the myofibril. The protein resides in the sarcomere. Functionally, part of the dynactin complex that activates the molecular motor dynein for ultra-processive transport along microtubules. This is Dynactin subunit 4 (Dctn4) from Mus musculus (Mouse).